Consider the following 43-residue polypeptide: Protein PsbN (43 aa).

A helical transmembrane segment spans residues 7-29 (IVIFVSSLLLGITTYSVYTAFGP).

This sequence belongs to the PsbN family.

It localises to the plastid. The protein resides in the chloroplast thylakoid membrane. Functionally, may play a role in photosystem I and II biogenesis. The protein is Protein PsbN of Phaeodactylum tricornutum (strain CCAP 1055/1).